A 173-amino-acid chain; its full sequence is Putative phosphoesterase GTNG_0743 (173 aa).

Residue His34 is the Proton donor of the active site. Short sequence motifs (HXTX) lie at residues 34 to 37 (HITL) and 115 to 118 (HITI). Catalysis depends on His115, which acts as the Proton acceptor.

Belongs to the 2H phosphoesterase superfamily. YjcG family.

The chain is Putative phosphoesterase GTNG_0743 from Geobacillus thermodenitrificans (strain NG80-2).